Here is a 280-residue protein sequence, read N- to C-terminus: Phosphatidylserine decarboxylase proenzyme (280 aa).

Catalysis depends on charge relay system; for autoendoproteolytic cleavage activity residues Asp-88, His-144, and Ser-247. Ser-247 acts as the Schiff-base intermediate with substrate; via pyruvic acid; for decarboxylase activity in catalysis. At Ser-247 the chain carries Pyruvic acid (Ser); by autocatalysis.

This sequence belongs to the phosphatidylserine decarboxylase family. PSD-B subfamily. Prokaryotic type I sub-subfamily. Heterodimer of a large membrane-associated beta subunit and a small pyruvoyl-containing alpha subunit. Pyruvate serves as cofactor. In terms of processing, is synthesized initially as an inactive proenzyme. Formation of the active enzyme involves a self-maturation process in which the active site pyruvoyl group is generated from an internal serine residue via an autocatalytic post-translational modification. Two non-identical subunits are generated from the proenzyme in this reaction, and the pyruvate is formed at the N-terminus of the alpha chain, which is derived from the carboxyl end of the proenzyme. The autoendoproteolytic cleavage occurs by a canonical serine protease mechanism, in which the side chain hydroxyl group of the serine supplies its oxygen atom to form the C-terminus of the beta chain, while the remainder of the serine residue undergoes an oxidative deamination to produce ammonia and the pyruvoyl prosthetic group on the alpha chain. During this reaction, the Ser that is part of the protease active site of the proenzyme becomes the pyruvoyl prosthetic group, which constitutes an essential element of the active site of the mature decarboxylase.

It localises to the cell membrane. It catalyses the reaction a 1,2-diacyl-sn-glycero-3-phospho-L-serine + H(+) = a 1,2-diacyl-sn-glycero-3-phosphoethanolamine + CO2. The protein operates within phospholipid metabolism; phosphatidylethanolamine biosynthesis; phosphatidylethanolamine from CDP-diacylglycerol: step 2/2. Functionally, catalyzes the formation of phosphatidylethanolamine (PtdEtn) from phosphatidylserine (PtdSer). The polypeptide is Phosphatidylserine decarboxylase proenzyme (Stenotrophomonas maltophilia (strain R551-3)).